Here is a 396-residue protein sequence, read N- to C-terminus: MSEFIAENRGADAITRPNWSAVFSVAFCVACLIIVEFLPVSLLTPMAQDLGISEGVAGQSVTVTAFVAMFASLFITQTIQATDRCYVVILFAVLLTLSCLLVSFANSFSLLLIGRACLGLALGGFWAMSASLTMRLVPPRTVPKALSVIFGAVSIALVIAAPLGSFLGELIGWRNVFNAAAVMGVLCIFWIIKSLPSLPGEPSHQKQNTFRLLQRPGVMAGMIAIFMSFAGQFAFFTYIRPVYMNLAGFGVDGLTLVLLSFGIASFIGTSLSSFILKRSVKLALAGAPLILAVSALVLTLWGSDKIVATGVAIIWGLTFALVPVGWSTWITRSLADQAEKAGSIQVAVIQLANTCGAAIGGYALDNIGLTSPLMLSGTLMLLTALLVTAKVKMKKS.

The Cytoplasmic portion of the chain corresponds to 1-21 (MSEFIAENRGADAITRPNWSA). The chain crosses the membrane as a helical span at residues 22–42 (VFSVAFCVACLIIVEFLPVSL). The Periplasmic portion of the chain corresponds to 43–54 (LTPMAQDLGISE). Residues 55 to 75 (GVAGQSVTVTAFVAMFASLFI) traverse the membrane as a helical segment. Residues 76-85 (TQTIQATDRC) lie on the Cytoplasmic side of the membrane. Residues 86–106 (YVVILFAVLLTLSCLLVSFAN) form a helical membrane-spanning segment. Residue S107 is a topological domain, periplasmic. Residues 108 to 128 (FSLLLIGRACLGLALGGFWAM) form a helical membrane-spanning segment. At 129–147 (SASLTMRLVPPRTVPKALS) the chain is on the cytoplasmic side. A helical transmembrane segment spans residues 148 to 168 (VIFGAVSIALVIAAPLGSFLG). At 169-175 (ELIGWRN) the chain is on the periplasmic side. The chain crosses the membrane as a helical span at residues 176 to 196 (VFNAAAVMGVLCIFWIIKSLP). The Cytoplasmic portion of the chain corresponds to 197–215 (SLPGEPSHQKQNTFRLLQR). The chain crosses the membrane as a helical span at residues 216 to 236 (PGVMAGMIAIFMSFAGQFAFF). Topologically, residues 237–255 (TYIRPVYMNLAGFGVDGLT) are periplasmic. Residues 256 to 276 (LVLLSFGIASFIGTSLSSFIL) traverse the membrane as a helical segment. The Cytoplasmic segment spans residues 277 to 281 (KRSVK). The helical transmembrane segment at 282 to 302 (LALAGAPLILAVSALVLTLWG) threads the bilayer. Residues 303–305 (SDK) lie on the Periplasmic side of the membrane. A helical transmembrane segment spans residues 306 to 326 (IVATGVAIIWGLTFALVPVGW). Topologically, residues 327-343 (STWITRSLADQAEKAGS) are cytoplasmic. A helical membrane pass occupies residues 344 to 364 (IQVAVIQLANTCGAAIGGYAL). Topologically, residues 365–366 (DN) are periplasmic. Residues 367–387 (IGLTSPLMLSGTLMLLTALLV) form a helical membrane-spanning segment. Topologically, residues 388–396 (TAKVKMKKS) are cytoplasmic.

Belongs to the major facilitator superfamily. DHA1 family. NepI (TC 2.A.1.2.26) subfamily.

The protein resides in the cell inner membrane. The catalysed reaction is inosine(in) + H(+)(out) = inosine(out) + H(+)(in). The enzyme catalyses guanosine(in) + H(+)(out) = guanosine(out) + H(+)(in). Involved in the efflux of purine ribonucleosides, such as inosine and guanosine. This Shigella boydii serotype 4 (strain Sb227) protein is Purine ribonucleoside efflux pump NepI.